Consider the following 101-residue polypeptide: Putative monooxygenase Rv0793 (101 aa).

The ABM domain occupies 5-93; that stretch reads VAVIARFMPR…LTRPVAVTVL (89 aa).

In terms of assembly, homodimer.

In terms of biological role, putative monooygenase that might be involved in antibiotic biosynthesis, or may act as reactive oxygen species scavenger that could help in evading host defenses. In Mycobacterium tuberculosis (strain ATCC 25618 / H37Rv), this protein is Putative monooxygenase Rv0793.